The following is a 493-amino-acid chain: Aspartyl/glutamyl-tRNA(Asn/Gln) amidotransferase subunit B (493 aa).

It belongs to the GatB/GatE family. GatB subfamily. Heterotrimer of A, B and C subunits.

The enzyme catalyses L-glutamyl-tRNA(Gln) + L-glutamine + ATP + H2O = L-glutaminyl-tRNA(Gln) + L-glutamate + ADP + phosphate + H(+). The catalysed reaction is L-aspartyl-tRNA(Asn) + L-glutamine + ATP + H2O = L-asparaginyl-tRNA(Asn) + L-glutamate + ADP + phosphate + 2 H(+). In terms of biological role, allows the formation of correctly charged Asn-tRNA(Asn) or Gln-tRNA(Gln) through the transamidation of misacylated Asp-tRNA(Asn) or Glu-tRNA(Gln) in organisms which lack either or both of asparaginyl-tRNA or glutaminyl-tRNA synthetases. The reaction takes place in the presence of glutamine and ATP through an activated phospho-Asp-tRNA(Asn) or phospho-Glu-tRNA(Gln). The polypeptide is Aspartyl/glutamyl-tRNA(Asn/Gln) amidotransferase subunit B (Aromatoleum aromaticum (strain DSM 19018 / LMG 30748 / EbN1) (Azoarcus sp. (strain EbN1))).